We begin with the raw amino-acid sequence, 486 residues long: Ribulose bisphosphate carboxylase large chain (486 aa).

Substrate-binding residues include Asn-126 and Thr-176. Lys-178 functions as the Proton acceptor in the catalytic mechanism. Lys-180 provides a ligand contact to substrate. 3 residues coordinate Mg(2+): Lys-204, Asp-206, and Glu-207. N6-carboxylysine is present on Lys-204. His-296 functions as the Proton acceptor in the catalytic mechanism. Positions 297, 329, and 381 each coordinate substrate.

This sequence belongs to the RuBisCO large chain family. Type I subfamily. Heterohexadecamer of 8 large chains and 8 small chains. Requires Mg(2+) as cofactor.

The enzyme catalyses 2 (2R)-3-phosphoglycerate + 2 H(+) = D-ribulose 1,5-bisphosphate + CO2 + H2O. It carries out the reaction D-ribulose 1,5-bisphosphate + O2 = 2-phosphoglycolate + (2R)-3-phosphoglycerate + 2 H(+). Functionally, ruBisCO catalyzes two reactions: the carboxylation of D-ribulose 1,5-bisphosphate, the primary event in carbon dioxide fixation, as well as the oxidative fragmentation of the pentose substrate. Both reactions occur simultaneously and in competition at the same active site. The polypeptide is Ribulose bisphosphate carboxylase large chain (Sinorhizobium medicae (strain WSM419) (Ensifer medicae)).